Here is a 444-residue protein sequence, read N- to C-terminus: Phosphoglucosamine mutase (444 aa).

Ser-104 functions as the Phosphoserine intermediate in the catalytic mechanism. Residues Ser-104, Asp-243, Asp-245, and Asp-247 each contribute to the Mg(2+) site. Ser-104 is subject to Phosphoserine.

Belongs to the phosphohexose mutase family. Mg(2+) is required as a cofactor. Activated by phosphorylation.

The catalysed reaction is alpha-D-glucosamine 1-phosphate = D-glucosamine 6-phosphate. Functionally, catalyzes the conversion of glucosamine-6-phosphate to glucosamine-1-phosphate. This Neisseria meningitidis serogroup B (strain ATCC BAA-335 / MC58) protein is Phosphoglucosamine mutase.